We begin with the raw amino-acid sequence, 430 residues long: Enolase (430 aa).

Residue Q167 participates in (2R)-2-phosphoglycerate binding. The active-site Proton donor is the E209. Residues D246, E287, and D314 each coordinate Mg(2+). The (2R)-2-phosphoglycerate site is built by K339, R368, S369, and K390. K339 functions as the Proton acceptor in the catalytic mechanism.

The protein belongs to the enolase family. Requires Mg(2+) as cofactor.

It localises to the cytoplasm. It is found in the secreted. The protein resides in the cell surface. It carries out the reaction (2R)-2-phosphoglycerate = phosphoenolpyruvate + H2O. The protein operates within carbohydrate degradation; glycolysis; pyruvate from D-glyceraldehyde 3-phosphate: step 4/5. In terms of biological role, catalyzes the reversible conversion of 2-phosphoglycerate (2-PG) into phosphoenolpyruvate (PEP). It is essential for the degradation of carbohydrates via glycolysis. The protein is Enolase of Prochlorococcus marinus subsp. pastoris (strain CCMP1986 / NIES-2087 / MED4).